A 315-amino-acid chain; its full sequence is Outer membrane protease OmpP (315 aa).

The N-terminal stretch at 1–23 is a signal peptide; it reads MQTKLLAIMLAAPVVFSSQEASA. Residues aspartate 103, aspartate 105, aspartate 230, and histidine 232 contribute to the active site.

It belongs to the peptidase A26 family.

The protein localises to the cell outer membrane. Functionally, protease; also acts as a receptor for bacteriophage Ox2. The chain is Outer membrane protease OmpP (ompP) from Escherichia coli (strain K12).